The chain runs to 263 residues: Small ribosomal subunit protein eS4, Y isoform 1 (263 aa).

The S4 RNA-binding domain occupies 42–104 (LPLIIFLRNR…TGEHFRLVYD (63 aa)).

The protein belongs to the eukaryotic ribosomal protein eS4 family.

The sequence is that of Small ribosomal subunit protein eS4, Y isoform 1 (RPS4Y1) from Macaca fuscata fuscata (Japanese macaque).